The following is a 320-amino-acid chain: UDP-N-acetylenolpyruvoylglucosamine reductase (320 aa).

Residues 34-200 (RAGGLAEVFF…TSAVFEGFAE (167 aa)) enclose the FAD-binding PCMH-type domain. Residue arginine 180 is part of the active site. Serine 229 functions as the Proton donor in the catalytic mechanism. The active site involves glutamate 299.

Belongs to the MurB family. The cofactor is FAD.

The protein localises to the cytoplasm. It carries out the reaction UDP-N-acetyl-alpha-D-muramate + NADP(+) = UDP-N-acetyl-3-O-(1-carboxyvinyl)-alpha-D-glucosamine + NADPH + H(+). It participates in cell wall biogenesis; peptidoglycan biosynthesis. In terms of biological role, cell wall formation. The polypeptide is UDP-N-acetylenolpyruvoylglucosamine reductase (Mesorhizobium japonicum (strain LMG 29417 / CECT 9101 / MAFF 303099) (Mesorhizobium loti (strain MAFF 303099))).